A 378-amino-acid chain; its full sequence is Sperm microtubule associated protein 2 (378 aa).

2 disordered regions span residues 1 to 35 and 47 to 79; these read MGEL…SDGS and WLQS…LPEV. A compositionally biased stretch (polar residues) spans 47 to 56; it reads WLQSSQATTE. The segment covering 61-77 has biased composition (acidic residues); that stretch reads DPEEEIPPEEMVGEELP. 7 THEG repeats span residues 113-132, 179-198, 217-236, 253-272, 285-304, 321-340, and 355-374; these read AKCR…PKFN, TITV…PKRF, STLE…PKIR, AAQM…PRAP, PKPY…PKAL, VTKN…PKIR, and ASLV…PKHI. The residue at position 290 (S290) is a Phosphoserine.

In terms of assembly, interacts with CCT5.

The protein resides in the nucleus. May be involved (but not essential) in spermatogenesis. This chain is Sperm microtubule associated protein 2, found in Rattus norvegicus (Rat).